The following is a 1211-amino-acid chain: PH domain-containing protein DDB_G0287875 (1211 aa).

The Ras-associating 1 domain occupies 5 to 90 (QKKILKVFDQ…YKFFFLNPNG (86 aa)). Over residues 103–112 (KSQSASTSGS) the composition is skewed to polar residues. Positions 103 to 133 (KSQSASTSGSAPPKKEPPKPQELQQKQHISK) are disordered. A PH domain is found at 132–223 (SKGKSGWLLR…WAQELQATMN (92 aa)). Calponin-homology (CH) domains follow at residues 277 to 384 (TTLV…VGYF) and 392 to 502 (FNMR…LSGQ). Disordered stretches follow at residues 520 to 941 (VEPE…TESV) and 973 to 1110 (TSAT…PKNT). A coiled-coil region spans residues 527–572 (SIRDKQLKLMREKKEEEDRLKKEKEEKEKEEKEKLEKESSAAAAAT). A compositionally biased stretch (basic and acidic residues) spans 528-565 (IRDKQLKLMREKKEEEDRLKKEKEEKEKEEKEKLEKES). 4 stretches are compositionally biased toward low complexity: residues 566–596 (SAAAAATSSIASTANSNSTEPPKPTTVPLKK), 607–646 (PPTVSSPTTTTTTTVPTTVPTTVTTTTTTTSPTTSPTLTP), 655–668 (KKPATAPLKLKPVA), and 676–691 (PSSSTSTTTTPTTTPS). Residues 703-729 (QLEKEKQDRLEKARLEKEKAEKEEQEF) show a composition bias toward basic and acidic residues. Residues 703 to 847 (QLEKEKQDRL…ERKHDENDMD (145 aa)) are a coiled coil. The span at 744 to 753 (LLEQQKQQQE) shows a compositional bias: low complexity. 2 stretches are compositionally biased toward basic and acidic residues: residues 754–778 (GQERLRKEEEEQQQQRELEEKQRQI) and 786–853 (EARI…KLLE). Residues 862-877 (PTITPPQSLHSSQIIR) show a composition bias toward polar residues. Positions 880–909 (IEEDDQTNSELEMFQNEYNRLQDEEEHINS) form a coiled coil. Low complexity-rich tracts occupy residues 914–936 (GSSGSNNSNNNNNNNNNKSGASS) and 976–1010 (TTSDSFNLSTSSTSLSFLPSSPDLSTNSTFTTNNN). A compositionally biased stretch (polar residues) spans 1032 to 1048 (TKEQQSIIDKQTGLVSK). Positions 1048 to 1076 (KQSTNNESNEQQQQQQQQQQLQQQQSSQN) form a coiled coil. Residues 1049–1083 (QSTNNESNEQQQQQQQQQQLQQQQSSQNSTTSIST) are compositionally biased toward low complexity. Residues 1093–1104 (NEEKEKESEPHK) are compositionally biased toward basic and acidic residues. Residues 1112 to 1196 (GRVVVRICLE…DRFVFKKNDI (85 aa)) enclose the Ras-associating 2 domain.

This Dictyostelium discoideum (Social amoeba) protein is PH domain-containing protein DDB_G0287875.